A 445-amino-acid polypeptide reads, in one-letter code: UPF0210 protein SSA_2018 (445 aa).

Belongs to the UPF0210 family. Homodimer.

The protein is UPF0210 protein SSA_2018 of Streptococcus sanguinis (strain SK36).